The chain runs to 842 residues: MINESVSKREGFHESISRETSASNALGLYNKFNDERNPRYRTMIAELHEFFHLTLAETITETDVKELECNKEKAAKFRKLMPKMLNNCRELTQRKSYIPYNSEFNGNDEKQKKFQLLHQHQIVLSFQEFCDELAKLIIDAHVLSFLTRCDYSYEIIPKNWTSFYKLFQYVMGAVGPIISYVPVNYPMIRKELGFETLTIFQYYDSKLFECMKSHFGREFSTLVSATIHHYIHMFPITNTMLEKEVPMLRIMSNCNFSIEGLSPKDFYMKTLRQYYCEESNLRPRLETFKNFKVLLTRNALLASLFSPEWVSDANDLFISHLLLNKKSISEYIEIGKDTYDEEKERYFKTETHFSLLMFRNAFEAKNMLSKFKEFCDDAVSEKLKAAYGSNHDTERLFDEVVQLANVDHLKIYSDSIEYHLCNLLGSTSKAIEQYVKYFESHLFIIVRKIKTTKKDLPRDMKIKYLNENLPILRLKFVNLPTFPNFFERSIFRKTILQSDQNSSFIKDILPVYKDSLMELFKQRIITNVSQEDEMRYRDQYQPYLSQFFQPVEVMADLRIKYASFLSFYENIEAAVKFGKTYNENNSKSFFPLIFDRERIPKVFQQSNEVKKNFVLPQEMDDTWNQFLRNYHEQNKVEDSDASKKELYPMWNLHHCEVESPYIIQDGTNLIFELTLFQTCVLTLFNESDHLTLQVISEQTKLAYKDLALVLKSFCNYKILTRDIDNTYSINESFKPDMKKVKNGKLRVVLPRTASLQSSNTGGERTSSAHHEGSNSQWTQELLKACITRSVKSERNGLDYDHLFETVKQQIKGFSVGEFKDALAKLLRDKFITRDESTATYKY.

A required for interaction with MMS1 region spans residues 1–50 (MINESVSKREGFHESISRETSASNALGLYNKFNDERNPRYRTMIAELHEF). Positions 755-765 (LQSSNTGGERT) are enriched in polar residues. The segment at 755-775 (LQSSNTGGERTSSAHHEGSNS) is disordered. A Glycyl lysine isopeptide (Lys-Gly) (interchain with G-Cter in NEDD8) cross-link involves residue Lys791.

The protein belongs to the cullin family. Component of multiple cullin-RING ligases (CRLs) composed of 4 subunits: the RING protein HRT1, the cullin RTT101, a linker protein MMS1, and one of many alternative substrate receptors belonging to a protein family described as DCAF (DDB1- and CUL4-associated factor). Component of a RTT101(MMS1-MMS22) complex with the substrate receptor MMS22. This complex further interacts with RTT107 and CTF4 to form RTT101-MMS1-MMS22-RTT107 and RTT101-MMS1-MMS22-CTF4 complexes respectively. Component of a RTT101(MSS1-CRT10) complex with the substrate receptor CRT10. Component of a RTT101(MSS1-ESC2) complex with the potential substrate receptor ESC2. Component of a RTT101(MSS1-ORC5) complex with the potential substrate receptor ORC5. Interacts (via C-ter) with HRT1; required for ubiquitin-ligase activity. Interacts (via N-ter) with MMS1. Post-translationally, neddylated. HRT1-binding is necessary for RUB1/NEDD8 modification of RTT101. The modification enhances ubiquitin-ligase activity.

The protein resides in the cytoplasm. The protein localises to the nucleus. Its pathway is protein modification; protein ubiquitination. Functionally, core component of multiple cullin-RING-based E3 ubiquitin-protein ligase complexes (CRLs), which mediate the ubiquitination of target proteins. As a scaffold protein may contribute to catalysis through positioning of the substrate and the ubiquitin-conjugating enzyme. The CRL associates with CDC34 as the E2 ubiquitin-conjugating enzyme. The functional specificity of the CRL depends on the type of the associated substrate receptor protein. RTT101(MMS1-MMS22) promotes fork progression through damaged DNA or natural pause sites by stabilizing replication proteins like the replication fork-pausing complex (FPC) and leading-strand polymerase at stalled replication forks. RTT101(MMS1-MMS22) ubiquitinates the acetylated histones H3K56ac-H4 at lysine residues H3K121, H3K122 and H3K125. Ubiquitination is required for efficient histone deposition during replication-coupled nucleosome assembly, probably by facilitating the transfer of H3-H4 from ASF1 to other chaperones involved in histone deposition. RTT101(MMS1-CRT10) may regulate nucleotide synthesis through transcriptional regulation of ribonucleotide reductase. RTT101(MMS1) is also involved in the non-functional rRNA decay (NRD) of 25S rRNA through the selective, ubiquitination-dependent degradation of nonfunctional ribosomal particles. Ubiquitinates the FACT (facilitates chromatin transcription) complex subunit SPT16 in an MMS1-independent manner. Involved in regulation of Ty1 transposition and protects the genome from Ty1 integration upstream of tRNA genes. The sequence is that of Cullin-8 (RTT101) from Saccharomyces cerevisiae (strain ATCC 204508 / S288c) (Baker's yeast).